A 487-amino-acid polypeptide reads, in one-letter code: Cobyric acid synthase (487 aa).

Positions 249–435 constitute a GATase cobBQ-type domain; that stretch reads GIDIAIVRLP…IHGIFDEGDF (187 aa). Residue C330 is the Nucleophile of the active site. Residue H427 is part of the active site.

Belongs to the CobB/CobQ family. CobQ subfamily.

It participates in cofactor biosynthesis; adenosylcobalamin biosynthesis. In terms of biological role, catalyzes amidations at positions B, D, E, and G on adenosylcobyrinic A,C-diamide. NH(2) groups are provided by glutamine, and one molecule of ATP is hydrogenolyzed for each amidation. In Clostridium perfringens (strain ATCC 13124 / DSM 756 / JCM 1290 / NCIMB 6125 / NCTC 8237 / Type A), this protein is Cobyric acid synthase.